The sequence spans 742 residues: uncharacterized protein (742 aa).

The tract at residues 1–102 (MMLLKRSNDN…FTQTKPNNTD (102 aa)) is disordered. Low complexity predominate over residues 18–28 (NRQNRQNNRQN). Positions 48–57 (RDSSRMDPVD) are enriched in basic and acidic residues. Polar residues-rich tracts occupy residues 60–69 (TLISFTSGKP) and 77–99 (HDTG…TKPN).

This is an uncharacterized protein from Acanthamoeba polyphaga mimivirus (APMV).